The following is a 378-amino-acid chain: Cobalt-precorrin-5B C(1)-methyltransferase (378 aa).

This sequence belongs to the CbiD family.

It carries out the reaction Co-precorrin-5B + S-adenosyl-L-methionine = Co-precorrin-6A + S-adenosyl-L-homocysteine. It functions in the pathway cofactor biosynthesis; adenosylcobalamin biosynthesis; cob(II)yrinate a,c-diamide from sirohydrochlorin (anaerobic route): step 6/10. Functionally, catalyzes the methylation of C-1 in cobalt-precorrin-5B to form cobalt-precorrin-6A. The chain is Cobalt-precorrin-5B C(1)-methyltransferase from Thermoplasma volcanium (strain ATCC 51530 / DSM 4299 / JCM 9571 / NBRC 15438 / GSS1).